The following is a 206-amino-acid chain: SOSS complex subunit B2 (206 aa).

Positions 26 to 89 (IVLEIGRVTK…SMWKGCLTLY (64 aa)) form a DNA-binding region, OB. Disordered regions lie at residues 114 to 146 (EPNP…GTGT) and 166 to 206 (SYAG…AFKR). The span at 181 to 196 (LPGTANNQTVMTTISN) shows a compositional bias: polar residues.

The protein belongs to the SOSS-B family. SOSS-B2 subfamily. Component of the SOSS complex, composed of SOSS-B (SOSS-B1/NABP2 or SOSS-B2/NABP1), SOSS-A/INTS3 and SOSS-C/INIP. SOSS complexes containing SOSS-B1/NABP2 are more abundant than complexes containing SOSS-B2/NABP1.

The protein resides in the nucleus. Component of the SOSS complex, a multiprotein complex that functions downstream of the MRN complex to promote DNA repair and G2/M checkpoint. In the SOSS complex, acts as a sensor of single-stranded DNA that binds to single-stranded DNA, in particular to polypyrimidines. The SOSS complex associates with DNA lesions and influences diverse endpoints in the cellular DNA damage response including cell-cycle checkpoint activation, recombinational repair and maintenance of genomic stability. Required for efficient homologous recombination-dependent repair of double-strand breaks (DSBs) and ATM-dependent signaling pathways. The sequence is that of SOSS complex subunit B2 (NABP1) from Bos taurus (Bovine).